The following is a 208-amino-acid chain: Methionine-R-sulfoxide reductase B1 (208 aa).

Over residues 27–36 the composition is skewed to basic and acidic residues; that stretch reads QDSDNPDKRY. The interval 27-48 is disordered; sequence QDSDNPDKRYSGPAATMDNKSE. The 135-residue stretch at 54–188 folds into the MsrB domain; the sequence is KEELRKRLTP…NSASIEFVNA (135 aa). Positions 93, 96, 154, and 157 each coordinate Zn(2+). Cys111 and Cys177 are disulfide-bonded. The Nucleophile role is filled by Cys177. Positions 189–208 are disordered; it reads DPATSSPPVATPTAAPIAQQ.

It belongs to the MsrB Met sulfoxide reductase family. It depends on Zn(2+) as a cofactor. In terms of tissue distribution, present in the embryonic nervous system (brain and cord) in neuronal cell bodies, along axons. Also present in embryonic muscles in motor axons. Localizes to growing bristle tips where it is distributed in small puntae. Present at and at sites of actin localization.

The protein localises to the cytoplasm. It is found in the nucleus. The protein resides in the cytoskeleton. The enzyme catalyses L-methionyl-[protein] + [thioredoxin]-disulfide + H2O = L-methionyl-(R)-S-oxide-[protein] + [thioredoxin]-dithiol. In terms of biological role, methionine-sulfoxide reductase that specifically reduces methionine (R)-sulfoxide back to methionine. While in many cases methionine oxidation is the result of random oxidation following oxidative stress, methionine oxidation is also a post-translational modification that takes place on specific residues. Acts as a regulator of actin assembly by reducing methionine (R)-sulfoxide mediated by Mical on actin thereby promoting filament repolymerization. The protein is Methionine-R-sulfoxide reductase B1 (SelR) of Drosophila melanogaster (Fruit fly).